We begin with the raw amino-acid sequence, 542 residues long: Probable quinate permease (542 aa).

At 1–22 (MSILALVEDRPTPKEVYNWKIY) the chain is on the cytoplasmic side. The helical transmembrane segment at 23–43 (LLAAVASFTSCMIGYDSAFIG) threads the bilayer. At 44 to 74 (TTLALSSFREEFGFSTMSKTAVNLVSANIVS) the chain is on the extracellular side. The helical transmembrane segment at 75 to 95 (CYQAGAFFGAFFAYPIGHFWG) threads the bilayer. Topologically, residues 96–97 (RK) are cytoplasmic. Residues 98–118 (WGLLFAGTIFTLGAGLMLGAN) traverse the membrane as a helical segment. Residues 119–130 (GDRGLGLLYGGR) lie on the Extracellular side of the membrane. The helical transmembrane segment at 131 to 151 (VLAGLGVGAGSNITPIYISEM) threads the bilayer. Residues 152-159 (APPSIRGR) are Cytoplasmic-facing. The chain crosses the membrane as a helical span at residues 160–180 (LVGVYELGWQIGGLVGFWINY). Residues 181–193 (GVSETLAPSHKQW) are Extracellular-facing. Residues 194-214 (IIPFAVQLIPSGLLLIGAVFL) form a helical membrane-spanning segment. At 215 to 285 (KESPRWLFSR…AGTNKKVMYR (71 aa)) the chain is on the cytoplasmic side. The chain crosses the membrane as a helical span at residues 286 to 306 (LFLGSMLFFWQNGSGINAINY). Residues 307-325 (YSPTVFKSIGLHGANTSMF) are Extracellular-facing. Residues 326–346 (STGIFGVVKTVVTFVWLLYLI) form a helical membrane-spanning segment. The Cytoplasmic segment spans residues 347-352 (DRLGRR). The chain crosses the membrane as a helical span at residues 353–373 (LLLLIGAAGAAVCLLIVGAYI). Topologically, residues 374–387 (KIADPASNPTQEMT) are extracellular. A helical membrane pass occupies residues 388–408 (GGGIAAMFFFYLYTVFYTPSW). The Cytoplasmic segment spans residues 409–456 (NGTPWVMNSEMFEPNMRSLAQACAAASNWLWNFLISRFTPQMFAKMEY). Residues 457-477 (GVWFFFASLMLLSIVFVFFLV) form a helical membrane-spanning segment. At 478-542 (PETKGIPLES…EHVSEDLPKV (65 aa)) the chain is on the extracellular side. Positions 523-542 (GYSKTGEQQVEHVSEDLPKV) are disordered. Basic and acidic residues predominate over residues 531–542 (QVEHVSEDLPKV).

The protein belongs to the major facilitator superfamily. Sugar transporter (TC 2.A.1.1) family. As to quaternary structure, interacts with creB. Post-translationally, ubiquitinated. Deubiquitinated by creB, probably to control its activity or amount.

Its subcellular location is the cell membrane. In terms of biological role, integral membrane transporter that imports quinic acid to be catabolized as a carbon source. The chain is Probable quinate permease (qutD) from Aspergillus fumigatus (strain CBS 144.89 / FGSC A1163 / CEA10) (Neosartorya fumigata).